Here is a 457-residue protein sequence, read N- to C-terminus: Allantoinase (457 aa).

Residues histidine 58, histidine 60, lysine 145, histidine 181, histidine 237, and aspartate 310 each coordinate Zn(2+). The residue at position 145 (lysine 145) is an N6-carboxylysine.

It belongs to the metallo-dependent hydrolases superfamily. Allantoinase family. Homotetramer. The cofactor is Zn(2+). Carboxylation allows a single lysine to coordinate two zinc ions.

It catalyses the reaction (S)-allantoin + H2O = allantoate + H(+). Its pathway is nitrogen metabolism; (S)-allantoin degradation; allantoate from (S)-allantoin: step 1/1. In terms of biological role, catalyzes the conversion of allantoin (5-ureidohydantoin) to allantoic acid by hydrolytic cleavage of the five-member hydantoin ring. The protein is Allantoinase of Solibacter usitatus (strain Ellin6076).